A 115-amino-acid polypeptide reads, in one-letter code: Type 3 secretion system chaperone YscG (115 aa).

It belongs to the YscG family. Component of the heterodimeric YscE-YscG chaperone. The YscE-YscG chaperone forms a stable ternary complex with YscF/SctF.

Its subcellular location is the cytoplasm. In terms of biological role, chaperone of the type III secretion system (T3SS), also called injectisome, which is used to inject bacterial effector proteins into eukaryotic host cells. Along with YscE, prevents premature polymerization of the YscF/SctF needle protein within the cytoplasm. Required for Yop secretion. This chain is Type 3 secretion system chaperone YscG, found in Yersinia enterocolitica.